The following is a 437-amino-acid chain: MRFPRIIISSDRSNSGKTIISSALMRVLSRKMKVRGFKAGPDFIDPKYHTLAARVPSINLDLWLMGIEGVKKSLIRYGKGYDIGIIEGVMGLYDGINVNYSTYELSEVTKTPIILVVNCSNVSSTVGAIVKGLKDYRNARIRGVIFNQIGSETHYNYCKSSIKEVQVLGYIKYDRNFSVPSRHLGLFTTEDFKETENVLQSVSKAIEESVDIDKIIEIANSAEELQEVDEAISNDELDTKKGIAAIAYDSAFNFYYSENIDLLRYKYQIEFFSPLLNEKIDNPSLIYVGGGYPELHLNELEKSSSTIRWIKKEAEKGTKILAECGGLMYLSKEIIADKSYKMVNLFDISIKAKDKLTIGYTELDVLSDNILGRKGEVLRGHEFHVSKAINLGNDVKFSMKNRIGKGIWENKDGAIVYNTLASYSHFHFSSARGLLSF.

One can recognise a GATase cobBQ-type domain in the interval 243-433; that stretch reads IAAIAYDSAF…SHFHFSSARG (191 aa). Cys324 functions as the Nucleophile in the catalytic mechanism.

This sequence belongs to the CobB/CbiA family. It depends on Mg(2+) as a cofactor.

The enzyme catalyses cob(II)yrinate + 2 L-glutamine + 2 ATP + 2 H2O = cob(II)yrinate a,c diamide + 2 L-glutamate + 2 ADP + 2 phosphate + 2 H(+). The protein operates within cofactor biosynthesis; adenosylcobalamin biosynthesis; cob(II)yrinate a,c-diamide from sirohydrochlorin (anaerobic route): step 10/10. In terms of biological role, catalyzes the ATP-dependent amidation of the two carboxylate groups at positions a and c of cobyrinate, using either L-glutamine or ammonia as the nitrogen source. This Sulfurisphaera tokodaii (strain DSM 16993 / JCM 10545 / NBRC 100140 / 7) (Sulfolobus tokodaii) protein is Cobyrinate a,c-diamide synthase.